Reading from the N-terminus, the 78-residue chain is Large ribosomal subunit protein bL28 (78 aa).

It belongs to the bacterial ribosomal protein bL28 family.

This is Large ribosomal subunit protein bL28 from Edwardsiella ictaluri (strain 93-146).